The sequence spans 450 residues: Growth/differentiation factor 7 (450 aa).

The first 19 residues, 1 to 19 (MDLSAAAALCLWLLSACRP), serve as a signal peptide directing secretion. Residues 20–321 (RDGLEAAAVL…AVIGGRRRRR (302 aa)) constitute a propeptide that is removed on maturation. An N-linked (GlcNAc...) asparagine glycan is attached at asparagine 83. Positions 296 to 349 (ASEPLPDPGTGTASPRAVIGGRRRRRTALAGTRTAQGSGGGAGRGHGRRGRSRC) are disordered. The segment covering 340 to 349 (GHGRRGRSRC) has biased composition (basic residues). 3 cysteine pairs are disulfide-bonded: cysteine 349/cysteine 415, cysteine 378/cysteine 447, and cysteine 382/cysteine 449.

This sequence belongs to the TGF-beta family. As to quaternary structure, homodimer; disulfide-linked.

It localises to the secreted. In terms of biological role, may play an active role in the motor area of the primate neocortex. In Homo sapiens (Human), this protein is Growth/differentiation factor 7 (GDF7).